We begin with the raw amino-acid sequence, 253 residues long: Ubiquinone biosynthesis O-methyltransferase (253 aa).

Residues R47, G78, D99, and M141 each coordinate S-adenosyl-L-methionine.

Belongs to the methyltransferase superfamily. UbiG/COQ3 family.

It carries out the reaction a 3-demethylubiquinol + S-adenosyl-L-methionine = a ubiquinol + S-adenosyl-L-homocysteine + H(+). The catalysed reaction is a 3-(all-trans-polyprenyl)benzene-1,2-diol + S-adenosyl-L-methionine = a 2-methoxy-6-(all-trans-polyprenyl)phenol + S-adenosyl-L-homocysteine + H(+). It functions in the pathway cofactor biosynthesis; ubiquinone biosynthesis. Its function is as follows. O-methyltransferase that catalyzes the 2 O-methylation steps in the ubiquinone biosynthetic pathway. The sequence is that of Ubiquinone biosynthesis O-methyltransferase from Rhodopseudomonas palustris (strain BisA53).